The primary structure comprises 945 residues: Isoleucine--tRNA ligase (945 aa).

Positions 66–76 (PYANGDIHLGH) match the 'HIGH' region motif. Residue glutamate 581 participates in L-isoleucyl-5'-AMP binding. A 'KMSKS' region motif is present at residues 622-626 (KMSKS). Position 625 (lysine 625) interacts with ATP. Residues cysteine 908, cysteine 911, cysteine 928, and cysteine 931 each coordinate Zn(2+).

The protein belongs to the class-I aminoacyl-tRNA synthetase family. IleS type 1 subfamily. As to quaternary structure, monomer. Requires Zn(2+) as cofactor.

The protein localises to the cytoplasm. It carries out the reaction tRNA(Ile) + L-isoleucine + ATP = L-isoleucyl-tRNA(Ile) + AMP + diphosphate. In terms of biological role, catalyzes the attachment of isoleucine to tRNA(Ile). As IleRS can inadvertently accommodate and process structurally similar amino acids such as valine, to avoid such errors it has two additional distinct tRNA(Ile)-dependent editing activities. One activity is designated as 'pretransfer' editing and involves the hydrolysis of activated Val-AMP. The other activity is designated 'posttransfer' editing and involves deacylation of mischarged Val-tRNA(Ile). This chain is Isoleucine--tRNA ligase, found in Burkholderia ambifaria (strain ATCC BAA-244 / DSM 16087 / CCUG 44356 / LMG 19182 / AMMD) (Burkholderia cepacia (strain AMMD)).